The following is a 100-amino-acid chain: Vesicle-associated membrane protein 3 (100 aa).

An N-acetylserine modification is found at Ser2. The Cytoplasmic segment spans residues 2 to 77 (STGPTAATGS…KRKYWWKNCK (76 aa)). Positions 14–74 (RLQQTQNQVD…AKLKRKYWWK (61 aa)) constitute a v-SNARE coiled-coil homology domain. Glycyl lysine isopeptide (Lys-Gly) (interchain with G-Cter in ubiquitin) cross-links involve residues Lys66, Lys68, and Lys77. The helical; Anchor for type IV membrane protein transmembrane segment at 78–98 (MWAIGITVLVIFIIIIIVWVV) threads the bilayer. Residues 99–100 (SS) are Vesicular-facing.

The protein belongs to the synaptobrevin family. In terms of assembly, interacts with POPDC1 (via the C-terminus cytoplasmic tail). Interacts with BCAP31; involved in VAMP3 export from the endoplasmic reticulum. Interacts with BAIAP3; this interaction is increased in the presence of calcium. Interacts with PICALM. Ubiquitinated by RNF167 at Lys-66, Lys-68 and Lys-77, regulating the recycling endosome pathway. Post-translationally, (Microbial infection) Targeted and hydrolyzed by C.botulinum neurotoxin type B (BoNT/B, botB) which hydrolyzes the 59-Gln-|-Phe-60 bond and probably inhibits neurotransmitter release. In terms of processing, (Microbial infection) Targeted and hydrolyzed by C.botulinum neurotoxin type D (BoNT/D, botD) which hydrolyzes the 42-Lys-|-Leu-43 bond and probably inhibits neurotransmitter release. Note that humans are not known to be infected by C.botulinum type D. (Microbial infection) Targeted and hydrolyzed by C.botulinum neurotoxin type F (BoNT/F, botF) which hydrolyzes the 41-Gln-|-Lys-42 bond and probably inhibits neurotransmitter release.

It is found in the early endosome membrane. The protein localises to the recycling endosome membrane. Its subcellular location is the synapse. It localises to the synaptosome. Functionally, SNARE involved in vesicular transport from the late endosomes to the trans-Golgi network. The chain is Vesicle-associated membrane protein 3 (VAMP3) from Homo sapiens (Human).